Consider the following 796-residue polypeptide: Protein translocase subunit SecA 2 (796 aa).

Residues Q84, 102–106, and D496 each bind ATP; that span reads GEGKT.

Belongs to the SecA family. Monomer and homodimer (Potential). Part of the accessory SecA2/SecY2 protein translocation apparatus required to export cell wall protein SraP.

Its subcellular location is the cell membrane. The protein resides in the cytoplasm. The catalysed reaction is ATP + H2O + cellular proteinSide 1 = ADP + phosphate + cellular proteinSide 2.. Its function is as follows. Part of the accessory SecA2/SecY2 system specifically required to export SraP, a serine-rich repeat cell wall protein encoded upstream in the same operon. The polypeptide is Protein translocase subunit SecA 2 (Staphylococcus aureus (strain NCTC 8325 / PS 47)).